The chain runs to 105 residues: uncharacterized protein (105 aa).

This is an uncharacterized protein from Escherichia coli (strain K12).